The following is a 168-amino-acid chain: Inorganic pyrophosphatase (168 aa).

Lys-23, Arg-37, and Tyr-49 together coordinate substrate. Mg(2+) is bound by residues Asp-59, Asp-64, and Asp-96. Tyr-133 provides a ligand contact to substrate.

Belongs to the PPase family. In terms of assembly, homohexamer. It depends on Mg(2+) as a cofactor.

Its subcellular location is the cytoplasm. It catalyses the reaction diphosphate + H2O = 2 phosphate + H(+). Functionally, catalyzes the hydrolysis of inorganic pyrophosphate (PPi) forming two phosphate ions. The polypeptide is Inorganic pyrophosphatase (Methanosarcina acetivorans (strain ATCC 35395 / DSM 2834 / JCM 12185 / C2A)).